A 163-amino-acid chain; its full sequence is Small ribosomal subunit protein bS18c (163 aa).

Disordered stretches follow at residues 1–52 (MYIS…IGPG) and 144–163 (NLRN…SSDC). Positions 7–48 (PFRKSKQPFRKSKQPFHKSKQPFRKFKQPFRKSKQPFRRRSR) are enriched in basic residues.

It belongs to the bacterial ribosomal protein bS18 family. Part of the 30S ribosomal subunit.

It localises to the plastid. It is found in the chloroplast. This Saccharum hybrid (Sugarcane) protein is Small ribosomal subunit protein bS18c.